We begin with the raw amino-acid sequence, 348 residues long: tRNA N6-adenosine threonylcarbamoyltransferase (348 aa).

Positions 111 and 115 each coordinate Fe cation. Residues 134 to 138, D167, G180, and N277 contribute to the substrate site; that span reads LISGG. D305 provides a ligand contact to Fe cation.

This sequence belongs to the KAE1 / TsaD family. Fe(2+) is required as a cofactor.

The protein resides in the cytoplasm. It carries out the reaction L-threonylcarbamoyladenylate + adenosine(37) in tRNA = N(6)-L-threonylcarbamoyladenosine(37) in tRNA + AMP + H(+). Functionally, required for the formation of a threonylcarbamoyl group on adenosine at position 37 (t(6)A37) in tRNAs that read codons beginning with adenine. Is involved in the transfer of the threonylcarbamoyl moiety of threonylcarbamoyl-AMP (TC-AMP) to the N6 group of A37, together with TsaE and TsaB. TsaD likely plays a direct catalytic role in this reaction. The polypeptide is tRNA N6-adenosine threonylcarbamoyltransferase (Haemophilus ducreyi (strain 35000HP / ATCC 700724)).